Consider the following 262-residue polypeptide: Nurim (262 aa).

Topologically, residues 1–4 are nuclear; that stretch reads MAPA. Residues 5–28 form a helical membrane-spanning segment; that stretch reads LLLIPAALASFILAFGTGVEFVRF. Residues 29-58 lie on the Perinuclear space side of the membrane; that stretch reads TSLRPLLGGIPESGGPDARQGWLAALQDRS. Residues 59–80 form a helical membrane-spanning segment; sequence ILAPLAWDLGLLLLFVGQHSLM. Over 81–97 the chain is Nuclear; sequence AAERVKAWTSRYFGVLQ. Residues 98 to 114 form a helical membrane-spanning segment; it reads RSLYVACTALALQLVMR. Topologically, residues 115–133 are perinuclear space; the sequence is YWEPIPKGPVLWEARAEPW. The helical transmembrane segment at 134–164 threads the bilayer; the sequence is ATWVPLLCFVLHVISWLLIFSILLVFDYAEL. At 165–191 the chain is on the nuclear side; the sequence is MGLKQVYYHVLGLGEPLALKSPRALRL. The chain crosses the membrane as a helical span at residues 192–210; the sequence is FSHLRHPVCVELLTVLWVV. The Perinuclear space portion of the chain corresponds to 211–216; that stretch reads PTLGTD. Residues 217 to 234 traverse the membrane as a helical segment; it reads RLLLAFLLTLYLGLAHGL. Residues 235–262 are Nuclear-facing; it reads DQQDLRYLRAQLQRKLHLLSRPQDGEAE.

It belongs to the nurim family.

Its subcellular location is the nucleus inner membrane. The chain is Nurim (NRM) from Homo sapiens (Human).